Reading from the N-terminus, the 282-residue chain is MEVITSIKEAKQIVKNWKSHHLSIGYVPTMGFLHDGHLSLVKNAKTQDKVIVSIFVNPMQFGPNEDFSSYPRDLERDIKMCQDNGVDMVFIPDMTQMYLKNFSTYVDMNIITDKLCGAKRPGHFRGVCTVLAKFFNILNPDIVYMGQKDAQQCVVVRHMVDDLNFDLKIQICPIIREEDGLAKSSRNVYLSEEERKASLAISQSIFLAEKLVREGKKNTSKIIQAMQDILEKEKLIKIDYIELVDFNTMDNIENIADNVLGAVAVFVGETRLIDNFLVQGLK.

Position 30–37 (30–37) interacts with ATP; the sequence is MGFLHDGH. His37 (proton donor) is an active-site residue. (R)-pantoate is bound at residue Gln60. Gln60 provides a ligand contact to beta-alanine. Residue 146–149 coordinates ATP; that stretch reads GQKD. Gln152 lines the (R)-pantoate pocket. ATP is bound by residues Ile175 and 183–186; that span reads KSSR.

The protein belongs to the pantothenate synthetase family. As to quaternary structure, homodimer.

The protein localises to the cytoplasm. It catalyses the reaction (R)-pantoate + beta-alanine + ATP = (R)-pantothenate + AMP + diphosphate + H(+). It functions in the pathway cofactor biosynthesis; (R)-pantothenate biosynthesis; (R)-pantothenate from (R)-pantoate and beta-alanine: step 1/1. Catalyzes the condensation of pantoate with beta-alanine in an ATP-dependent reaction via a pantoyl-adenylate intermediate. The protein is Pantothenate synthetase of Campylobacter jejuni subsp. doylei (strain ATCC BAA-1458 / RM4099 / 269.97).